We begin with the raw amino-acid sequence, 192 residues long: MATEIDINRIQKDIFIEHKGEPYRVLDYEHVKPGKGQAFVRVKAKNMLTGNVTELTFKASDRIPLADFEQVYATYSYNDGENYYFMNTQTYDMIAVPKEKIEEEAKFLKEGMEVIVFLYKGQPIGIELPKHVELQVVETEPAFKGDTQAGGTKPAKLETGAVIQVPFFVKEGDIVKVDTRTGSYVERVKEAK.

Belongs to the elongation factor P family.

The protein localises to the cytoplasm. The protein operates within protein biosynthesis; polypeptide chain elongation. In terms of biological role, involved in peptide bond synthesis. Stimulates efficient translation and peptide-bond synthesis on native or reconstituted 70S ribosomes in vitro. Probably functions indirectly by altering the affinity of the ribosome for aminoacyl-tRNA, thus increasing their reactivity as acceptors for peptidyl transferase. The protein is Elongation factor P (efp) of Aquifex aeolicus (strain VF5).